A 418-amino-acid polypeptide reads, in one-letter code: E3 ubiquitin-protein ligase pellino homolog 1 (418 aa).

The FHA; atypical domain maps to 13–200; that stretch reads APVKYGELIV…MHPRNGFTED (188 aa). S121 carries the post-translational modification Phosphoserine. Phosphothreonine is present on T127. The ring-like domain; necessary for ubiquitination of RIPK3 stretch occupies residues 311-399; it reads CGHVHGYHNW…TFHAACPFCA (89 aa).

The protein belongs to the pellino family. In terms of assembly, interacts with MAP3K7. Upon IL1B treatment, forms a complex with TRAF6, IRAK1, IRAK4 and MYD88; this complex recruits MAP3K7/TAK1, TAB1 and TAB2 to mediate NF-kappa-B activation. Direct binding of SMAD6 to PELI1 prevents the complex formation and hence negatively regulates IL1R-TLR signaling and eventually NF-kappa-B-mediated gene expression. Interacts (via atypical FHA domain) with RIPK3. Binds preferentially to the 'Thr-182' phosphorylated form of RIPK3. Interacts with RIPK1. Post-translationally, phosphorylation by IRAK1 and IRAK4 enhances its E3 ligase activity. Phosphorylated by ATM in response to DNA damage, promoting localization to DNA double-strand breaks (DSBs) and ability to mediate 'Lys-63'-linked ubiquitination of NBN. In terms of processing, sumoylated.

It is found in the chromosome. The enzyme catalyses S-ubiquitinyl-[E2 ubiquitin-conjugating enzyme]-L-cysteine + [acceptor protein]-L-lysine = [E2 ubiquitin-conjugating enzyme]-L-cysteine + N(6)-ubiquitinyl-[acceptor protein]-L-lysine.. Its pathway is protein modification; protein ubiquitination. Functionally, E3 ubiquitin ligase catalyzing the covalent attachment of ubiquitin moieties onto substrate proteins. Involved in the TLR and IL-1 signaling pathways via interaction with the complex containing IRAK kinases and TRAF6. Acts as a positive regulator of inflammatory response in microglia through activation of NF-kappa-B and MAP kinase. Mediates 'Lys-63'-linked polyubiquitination of IRAK1 allowing subsequent NF-kappa-B activation. Conjugates 'Lys-63'-linked ubiquitin chains to the adapter protein ASC/PYCARD, which in turn is crucial for NLRP3 inflammasome activation. Mediates 'Lys-48'-linked polyubiquitination of RIPK3 leading to its subsequent proteasome-dependent degradation; preferentially recognizes and mediates the degradation of the 'Thr-182' phosphorylated form of RIPK3. Negatively regulates necroptosis by reducing RIPK3 expression. Mediates 'Lys-63'-linked ubiquitination of RIPK1. Following phosphorylation by ATM, catalyzes 'Lys-63'-linked ubiquitination of NBN, promoting DNA repair via homologous recombination. Negatively regulates activation of the metabolic mTORC1 signaling pathway by mediating 'Lys-63'-linked ubiquitination of mTORC1-inhibitory protein TSC1 and thereby promoting TSC1/TSC2 complex stability. The polypeptide is E3 ubiquitin-protein ligase pellino homolog 1 (Peli1) (Mus musculus (Mouse)).